The chain runs to 500 residues: Proline/betaine transporter (500 aa).

Over 1 to 37 the chain is Cytoplasmic; that stretch reads MLKRKKVKPITLRDVTIIDDGKLRKAITAASLGNAME. Residues 38–58 form a helical membrane-spanning segment; sequence WFDFGVYGFVAYALGKVFFPG. The Periplasmic segment spans residues 59 to 65; the sequence is ADPSVQM. A helical transmembrane segment spans residues 66 to 86; the sequence is VAALATFSVPFLIRPLGGLFF. The Cytoplasmic portion of the chain corresponds to 87–97; sequence GMLGDKYGRQK. The helical transmembrane segment at 98 to 118 threads the bilayer; the sequence is ILAITIVIMSISTFCIGLIPS. Over 119–121 the chain is Periplasmic; that stretch reads YDT. A helical membrane pass occupies residues 122–142; sequence IGIWAPILLLICKMAQGFSVG. Topologically, residues 143–169 are cytoplasmic; sequence GEYTGASIFVAEYSPDRKRGFMGSWLD. The helical transmembrane segment at 170 to 190 threads the bilayer; sequence FGSIAGFVLGAGVVVLISTIV. At 191–194 the chain is on the periplasmic side; the sequence is GEAN. A helical membrane pass occupies residues 195–215; it reads FLDWGWRIPFFIALPLGIIGL. Residues 216–260 lie on the Cytoplasmic side of the membrane; the sequence is YLRHALEETPAFQQHVDKLEQGDREGLQDGPKVSFKEIATKYWRS. The helical transmembrane segment at 261-281 threads the bilayer; sequence LLTCIGLVIATNVTYYMLLTY. At 282–297 the chain is on the periplasmic side; the sequence is MPSYLSHNLHYSEDHG. Residues 298–318 form a helical membrane-spanning segment; the sequence is VLIIIAIMIGMLFVQPVMGLL. The Cytoplasmic portion of the chain corresponds to 319–325; the sequence is SDRFGRR. Residues 326–346 form a helical membrane-spanning segment; that stretch reads PFVLLGSVALFVLAIPAFILI. Residues 347–350 lie on the Periplasmic side of the membrane; that stretch reads NSNV. The helical transmembrane segment at 351 to 371 threads the bilayer; the sequence is IGLIFAGLLMLAVILNCFTGV. Over 372–390 the chain is Cytoplasmic; that stretch reads MASTLPAMFPTHIRYSALA. Residues 391–411 traverse the membrane as a helical segment; it reads AAFNISVLVAGLTPTLAAWLV. At 412-416 the chain is on the periplasmic side; sequence ESSQN. Residues 417 to 437 form a helical membrane-spanning segment; it reads LMMPAYYLMVVAVVGLITGVT. Topologically, residues 438–500 are cytoplasmic; sequence MKETANRPLK…LVQQHPRIDE (63 aa). Positions 453–498 form a coiled coil; the sequence is ASDIQEAKEILVEHYDNIEQKIDDIDHEIADLQAKRTRLVQQHPRI.

This sequence belongs to the major facilitator superfamily. Metabolite:H+ Symporter (MHS) family (TC 2.A.1.6) family.

It localises to the cell inner membrane. Proton symporter that senses osmotic shifts and responds by importing osmolytes such as proline, glycine betaine, stachydrine, pipecolic acid, ectoine and taurine. It is both an osmosensor and an osmoregulator which is available to participate early in the bacterial osmoregulatory response. This chain is Proline/betaine transporter (proP), found in Escherichia coli O157:H7.